Consider the following 255-residue polypeptide: Acetylglutamate kinase (255 aa).

Residues 40–41 (GG), R62, and N153 contribute to the substrate site.

This sequence belongs to the acetylglutamate kinase family. ArgB subfamily.

Its subcellular location is the cytoplasm. It carries out the reaction N-acetyl-L-glutamate + ATP = N-acetyl-L-glutamyl 5-phosphate + ADP. It participates in amino-acid biosynthesis; L-arginine biosynthesis; N(2)-acetyl-L-ornithine from L-glutamate: step 2/4. In terms of biological role, catalyzes the ATP-dependent phosphorylation of N-acetyl-L-glutamate. The sequence is that of Acetylglutamate kinase from Bacillus thuringiensis (strain Al Hakam).